A 428-amino-acid chain; its full sequence is Serine--tRNA ligase (428 aa).

Position 231 to 233 (231 to 233) interacts with L-serine; it reads TSE. ATP is bound by residues 262-264 and Val-278; that span reads RRE. Glu-285 lines the L-serine pocket. ATP is bound at residue 349–352; the sequence is ELTS. Thr-384 lines the L-serine pocket.

Belongs to the class-II aminoacyl-tRNA synthetase family. Type-1 seryl-tRNA synthetase subfamily. Homodimer. The tRNA molecule binds across the dimer.

It is found in the cytoplasm. The catalysed reaction is tRNA(Ser) + L-serine + ATP = L-seryl-tRNA(Ser) + AMP + diphosphate + H(+). The enzyme catalyses tRNA(Sec) + L-serine + ATP = L-seryl-tRNA(Sec) + AMP + diphosphate + H(+). It participates in aminoacyl-tRNA biosynthesis; selenocysteinyl-tRNA(Sec) biosynthesis; L-seryl-tRNA(Sec) from L-serine and tRNA(Sec): step 1/1. In terms of biological role, catalyzes the attachment of serine to tRNA(Ser). Is also able to aminoacylate tRNA(Sec) with serine, to form the misacylated tRNA L-seryl-tRNA(Sec), which will be further converted into selenocysteinyl-tRNA(Sec). The protein is Serine--tRNA ligase of Bifidobacterium animalis subsp. lactis (strain AD011).